Consider the following 142-residue polypeptide: Small ribosomal subunit protein uS9 (142 aa).

It belongs to the universal ribosomal protein uS9 family. Component of the small ribosomal subunit (SSU). Mature N.crassa ribosomes consist of a small (40S) and a large (60S) subunit. The 40S small subunit contains 1 molecule of ribosomal RNA (18S rRNA) and at least 32 different proteins. The large 60S subunit contains 3 rRNA molecules (26S, 5.8S and 5S rRNA) and at least 42 different proteins.

The protein resides in the cytoplasm. Functionally, component of the ribosome, a large ribonucleoprotein complex responsible for the synthesis of proteins in the cell. The small ribosomal subunit (SSU) binds messenger RNAs (mRNAs) and translates the encoded message by selecting cognate aminoacyl-transfer RNA (tRNA) molecules. The large subunit (LSU) contains the ribosomal catalytic site termed the peptidyl transferase center (PTC), which catalyzes the formation of peptide bonds, thereby polymerizing the amino acids delivered by tRNAs into a polypeptide chain. The nascent polypeptides leave the ribosome through a tunnel in the LSU and interact with protein factors that function in enzymatic processing, targeting, and the membrane insertion of nascent chains at the exit of the ribosomal tunnel. This is Small ribosomal subunit protein uS9 (rps-16) from Neurospora crassa (strain ATCC 24698 / 74-OR23-1A / CBS 708.71 / DSM 1257 / FGSC 987).